A 125-amino-acid polypeptide reads, in one-letter code: Small ribosomal subunit protein uS13 (125 aa).

The protein belongs to the universal ribosomal protein uS13 family. As to quaternary structure, part of the 30S ribosomal subunit. Forms a loose heterodimer with protein S19. Forms two bridges to the 50S subunit in the 70S ribosome.

Located at the top of the head of the 30S subunit, it contacts several helices of the 16S rRNA. In the 70S ribosome it contacts the 23S rRNA (bridge B1a) and protein L5 of the 50S subunit (bridge B1b), connecting the 2 subunits; these bridges are implicated in subunit movement. Contacts the tRNAs in the A and P-sites. The chain is Small ribosomal subunit protein uS13 from Rickettsia africae (strain ESF-5).